Consider the following 739-residue polypeptide: Phosphoribosylformylglycinamidine synthase subunit PurL (739 aa).

His54 is an active-site residue. Residues Tyr57 and Lys96 each contribute to the ATP site. Glu98 is a binding site for Mg(2+). Residues 99-102 and Arg121 contribute to the substrate site; that span reads SHNH. Catalysis depends on His100, which acts as the Proton acceptor. Asp122 provides a ligand contact to Mg(2+). Gln245 contributes to the substrate binding site. Asp273 is a Mg(2+) binding site. 317–319 contributes to the substrate binding site; the sequence is ESQ. The ATP site is built by Asp500 and Gly537. Asn538 is a Mg(2+) binding site. Ser540 contacts substrate.

Belongs to the FGAMS family. In terms of assembly, monomer. Part of the FGAM synthase complex composed of 1 PurL, 1 PurQ and 2 PurS subunits.

Its subcellular location is the cytoplasm. The enzyme catalyses N(2)-formyl-N(1)-(5-phospho-beta-D-ribosyl)glycinamide + L-glutamine + ATP + H2O = 2-formamido-N(1)-(5-O-phospho-beta-D-ribosyl)acetamidine + L-glutamate + ADP + phosphate + H(+). It participates in purine metabolism; IMP biosynthesis via de novo pathway; 5-amino-1-(5-phospho-D-ribosyl)imidazole from N(2)-formyl-N(1)-(5-phospho-D-ribosyl)glycinamide: step 1/2. In terms of biological role, part of the phosphoribosylformylglycinamidine synthase complex involved in the purines biosynthetic pathway. Catalyzes the ATP-dependent conversion of formylglycinamide ribonucleotide (FGAR) and glutamine to yield formylglycinamidine ribonucleotide (FGAM) and glutamate. The FGAM synthase complex is composed of three subunits. PurQ produces an ammonia molecule by converting glutamine to glutamate. PurL transfers the ammonia molecule to FGAR to form FGAM in an ATP-dependent manner. PurS interacts with PurQ and PurL and is thought to assist in the transfer of the ammonia molecule from PurQ to PurL. This chain is Phosphoribosylformylglycinamidine synthase subunit PurL, found in Bacillus cereus (strain AH187).